The sequence spans 513 residues: Serine/threonine-protein phosphatase T (513 aa).

TPR repeat units follow at residues 12–45 (ALER…DSTQ), 46–79 (SIYF…DPKN), and 80–113 (IKAY…KPND). The tract at residues 188–513 (KNMSQEFISK…MAYSNGGFGL (326 aa)) is catalytic. The Mn(2+) site is built by aspartate 249, histidine 251, aspartate 278, and asparagine 310. Histidine 311 acts as the Proton donor/acceptor in catalysis. The Mn(2+) site is built by histidine 359 and histidine 434.

This sequence belongs to the PPP phosphatase family. PP-5 (PP-T) subfamily. In terms of assembly, interacts (via TPR repeats) with HSP82 (via C-terminal MEEVD pentapeptide). Mg(2+) is required as a cofactor. The cofactor is Mn(2+).

Its subcellular location is the nucleus. It carries out the reaction O-phospho-L-seryl-[protein] + H2O = L-seryl-[protein] + phosphate. The catalysed reaction is O-phospho-L-threonyl-[protein] + H2O = L-threonyl-[protein] + phosphate. Stimulated by arachidonic acid and other unsaturated fatty acids, and by arachidoyl coenzyme A. Its function is as follows. Protein phosphatase that specifically binds to and dephosphorylates the molecular chaperone Hsp90 (HSC82 and HSP82). Dephosphorylation positively regulates the Hsp90 chaperone machinery. This chain is Serine/threonine-protein phosphatase T (PPT1), found in Saccharomyces cerevisiae (strain ATCC 204508 / S288c) (Baker's yeast).